Consider the following 127-residue polypeptide: Protein P6 (127 aa).

The protein localises to the virion membrane. This is Protein P6 (VI) from Pseudoalteromonas espejiana (Bacteriophage PM2).